The following is a 184-amino-acid chain: Large ribosomal subunit protein uL5 (184 aa).

This sequence belongs to the universal ribosomal protein uL5 family. In terms of assembly, part of the 50S ribosomal subunit; part of the 5S rRNA/L5/L18/L25 subcomplex. Contacts the 5S rRNA and the P site tRNA. Forms a bridge to the 30S subunit in the 70S ribosome.

Its function is as follows. This is one of the proteins that bind and probably mediate the attachment of the 5S RNA into the large ribosomal subunit, where it forms part of the central protuberance. In the 70S ribosome it contacts protein S13 of the 30S subunit (bridge B1b), connecting the 2 subunits; this bridge is implicated in subunit movement. Contacts the P site tRNA; the 5S rRNA and some of its associated proteins might help stabilize positioning of ribosome-bound tRNAs. The chain is Large ribosomal subunit protein uL5 from Thermotoga maritima (strain ATCC 43589 / DSM 3109 / JCM 10099 / NBRC 100826 / MSB8).